The sequence spans 449 residues: Probable glucuronosyltransferase 47 A (449 aa).

At 1-31 (MEHPLECADSCSLAMSWFCNKKCRGWGLMKR) the chain is on the cytoplasmic side. Residues 32–52 (TVVASGLRSVVLLLLFIYFVQ) form a helical; Signal-anchor for type II membrane protein membrane-spanning segment. Residues 53–449 (DVTAEMGHQR…GDLYPWGNDL (397 aa)) are Lumenal-facing. N-linked (GlcNAc...) asparagine glycosylation is found at Asn-172 and Asn-433.

The protein belongs to the glycosyltransferase 47 family. As to expression, mostly expressed in newly formed or expanding tissues.

The protein localises to the golgi apparatus membrane. Its function is as follows. Involved in the synthesis of glucuronoxylan hemicellulose in secondary cell walls. The chain is Probable glucuronosyltransferase 47 A from Physcomitrium patens (Spreading-leaved earth moss).